The primary structure comprises 291 residues: Protease HtpX (291 aa).

2 helical membrane passes run 4 to 24 (IALF…VLNI) and 36 to 56 (LSGL…ISLM). Residue His-143 coordinates Zn(2+). Glu-144 is a catalytic residue. His-147 is a binding site for Zn(2+). The next 2 membrane-spanning stretches (helical) occupy residues 151–171 (GDMI…IFLS) and 199–219 (FIVS…LTMW). Glu-225 contributes to the Zn(2+) binding site.

The protein belongs to the peptidase M48B family. Requires Zn(2+) as cofactor.

The protein resides in the cell inner membrane. This Aliivibrio fischeri (strain MJ11) (Vibrio fischeri) protein is Protease HtpX.